Here is a 143-residue protein sequence, read N- to C-terminus: Deoxyuridine 5'-triphosphate nucleotidohydrolase (143 aa).

Residues Arg63–Gly65, Asn76, Thr80–Asp82, and Lys90 contribute to the substrate site.

Belongs to the dUTPase family. Requires Mg(2+) as cofactor.

It catalyses the reaction dUTP + H2O = dUMP + diphosphate + H(+). The protein operates within pyrimidine metabolism; dUMP biosynthesis; dUMP from dCTP (dUTP route): step 2/2. In terms of biological role, this enzyme is involved in nucleotide metabolism: it produces dUMP, the immediate precursor of thymidine nucleotides and it decreases the intracellular concentration of dUTP so that uracil cannot be incorporated into DNA. In Clostridioides difficile (Peptoclostridium difficile), this protein is Deoxyuridine 5'-triphosphate nucleotidohydrolase.